A 485-amino-acid chain; its full sequence is Glutamate--tRNA ligase (485 aa).

The short motif at 11–21 (PSPTGHLHIGN) is the 'HIGH' region element. Positions 252-256 (KLSKR) match the 'KMSKS' region motif. Residue Lys255 coordinates ATP.

It belongs to the class-I aminoacyl-tRNA synthetase family. Glutamate--tRNA ligase type 1 subfamily. As to quaternary structure, monomer.

The protein resides in the cytoplasm. The catalysed reaction is tRNA(Glu) + L-glutamate + ATP = L-glutamyl-tRNA(Glu) + AMP + diphosphate. Catalyzes the attachment of glutamate to tRNA(Glu) in a two-step reaction: glutamate is first activated by ATP to form Glu-AMP and then transferred to the acceptor end of tRNA(Glu). The chain is Glutamate--tRNA ligase from Bacillus mycoides (strain KBAB4) (Bacillus weihenstephanensis).